Here is a 528-residue protein sequence, read N- to C-terminus: QDRPIKFSTEGATSQSYKQFIEALRERLRGGLIHDIPVLPDPTTLQERNRYITVELSNSDTESIEVGIDVTNAYVVAYRAGTQSYFLRDAPSSASDYLFTGTDQHSLPFYGTYGDLERWAHQSRQQIPLGLQALTHGISFFRSGGNDNEEKARTLIVIIQMVAEAARFRYISNRVRVSIQTGTAFQPDAAMISLENNWDNLSRGVQESVQDTFPNQVTLTNIRNEPVIVDSLSHPTVAVLALMLFVCNPPNANQSPLLIRSIVEKSKICSSRYEPTVRIGGRDGMCVDVYDNGYHNGNRIIMWKCKDRLEENQLWTLKSDKTIRSNGKCLTTYGYAPGSYVMIYDCTSAVAEATYWEIWDNGTIINPKSALVLSAESSSMGGTLTVQTNEYLMRQGWRTGNNTSPFVTSISGYSDLCMQAQGSNVWMADCDSNKKEQQWALYTDGSIRSVQNTNNCLTSKDHKQGSTILLMGCSNGWASQRWVFKNDGSIYSLYDDMVMDVKGSDPSLKQIILWPYTGKPNQIWLTLF.

A Pyrrolidone carboxylic acid modification is found at glutamine 1. Glutamate 164 is a catalytic residue. Disulfide bonds link cysteine 247-cysteine 269, cysteine 286-cysteine 305, and cysteine 329-cysteine 346. Residues 273–400 (YEPTVRIGGR…YLMRQGWRTG (128 aa)) form the Ricin B-type lectin 1 domain. One copy of the 1-alpha repeat lies at 283–325 (DGMCVDVYDNGYHNGNRIIMWKCKDRLEENQLWTLKSDKTIRS). A 1-beta repeat occupies 326–366 (NGKCLTTYGYAPGSYVMIYDCTSAVAEATYWEIWDNGTIIN). Residues asparagine 361 and asparagine 401 are each glycosylated (N-linked (GlcNAc...) asparagine). The 1-gamma repeat unit spans residues 369–401 (SALVLSAESSSMGGTLTVQTNEYLMRQGWRTGN). The Ricin B-type lectin 2 domain maps to 403–527 (TSPFVTSISG…GKPNQIWLTL (125 aa)). One copy of the 2-alpha repeat lies at 414–449 (SDLCMQAQGSNVWMADCDSNKKEQQWALYTDGSIRS). 2 cysteine pairs are disulfide-bonded: cysteine 417/cysteine 430 and cysteine 456/cysteine 473. Residues 453 to 492 (TNNCLTSKDHKQGSTILLMGCSNGWASQRWVFKNDGSIYS) form a 2-beta repeat. Residues 495-528 (DDMVMDVKGSDPSLKQIILWPYTGKPNQIWLTLF) form a 2-gamma repeat.

The protein in the N-terminal section; belongs to the ribosome-inactivating protein family. Type 2 RIP subfamily. Disulfide-linked dimer of A and B chains.

The enzyme catalyses Endohydrolysis of the N-glycosidic bond at one specific adenosine on the 28S rRNA.. Functionally, the A chain is responsible for inhibiting protein synthesis through the catalytic inactivation of 60S ribosomal subunits by removing adenine from position 4,324 of 28S rRNA. Abrin-a is more toxic than ricin. The B chain is a galactose-specific lectin that facilitates the binding of abrin to the cell membrane that precedes endocytosis. This Abrus precatorius (Indian licorice) protein is Abrin-a.